Reading from the N-terminus, the 181-residue chain is Probable nicotinate-nucleotide adenylyltransferase (181 aa).

This sequence belongs to the NadD family.

The catalysed reaction is nicotinate beta-D-ribonucleotide + ATP + H(+) = deamido-NAD(+) + diphosphate. The protein operates within cofactor biosynthesis; NAD(+) biosynthesis; deamido-NAD(+) from nicotinate D-ribonucleotide: step 1/1. Its function is as follows. Catalyzes the reversible adenylation of nicotinate mononucleotide (NaMN) to nicotinic acid adenine dinucleotide (NaAD). This Campylobacter jejuni subsp. jejuni serotype O:6 (strain 81116 / NCTC 11828) protein is Probable nicotinate-nucleotide adenylyltransferase.